We begin with the raw amino-acid sequence, 123 residues long: NADH-quinone oxidoreductase subunit A (123 aa).

3 helical membrane passes run 11-31 (YLPI…IMML), 68-88 (LVAI…PWAI), and 93-113 (IGKI…IGFI).

Belongs to the complex I subunit 3 family. As to quaternary structure, NDH-1 is composed of 14 different subunits. Subunits NuoA, H, J, K, L, M, N constitute the membrane sector of the complex.

The protein localises to the cell inner membrane. The enzyme catalyses a quinone + NADH + 5 H(+)(in) = a quinol + NAD(+) + 4 H(+)(out). In terms of biological role, NDH-1 shuttles electrons from NADH, via FMN and iron-sulfur (Fe-S) centers, to quinones in the respiratory chain. The immediate electron acceptor for the enzyme in this species is believed to be ubiquinone. Couples the redox reaction to proton translocation (for every two electrons transferred, four hydrogen ions are translocated across the cytoplasmic membrane), and thus conserves the redox energy in a proton gradient. The polypeptide is NADH-quinone oxidoreductase subunit A (Rickettsia typhi (strain ATCC VR-144 / Wilmington)).